Reading from the N-terminus, the 196-residue chain is Imidazoleglycerol-phosphate dehydratase (196 aa).

Belongs to the imidazoleglycerol-phosphate dehydratase family.

It localises to the cytoplasm. It carries out the reaction D-erythro-1-(imidazol-4-yl)glycerol 3-phosphate = 3-(imidazol-4-yl)-2-oxopropyl phosphate + H2O. Its pathway is amino-acid biosynthesis; L-histidine biosynthesis; L-histidine from 5-phospho-alpha-D-ribose 1-diphosphate: step 6/9. The protein is Imidazoleglycerol-phosphate dehydratase of Desulfitobacterium hafniense (strain Y51).